A 186-amino-acid chain; its full sequence is Acireductone dioxygenase (186 aa).

The segment at 1 to 21 is disordered; the sequence is MSRLSIFPDGSTSMDQSSPTP. Polar residues predominate over residues 10-20; sequence GSTSMDQSSPT. Residues H103, H105, E109, and H147 each coordinate Fe(2+). 4 residues coordinate Ni(2+): H103, H105, E109, and H147.

Belongs to the acireductone dioxygenase (ARD) family. As to quaternary structure, monomer. The cofactor is Fe(2+). Ni(2+) is required as a cofactor.

The enzyme catalyses 1,2-dihydroxy-5-(methylsulfanyl)pent-1-en-3-one + O2 = 3-(methylsulfanyl)propanoate + CO + formate + 2 H(+). It catalyses the reaction 1,2-dihydroxy-5-(methylsulfanyl)pent-1-en-3-one + O2 = 4-methylsulfanyl-2-oxobutanoate + formate + 2 H(+). It functions in the pathway amino-acid biosynthesis; L-methionine biosynthesis via salvage pathway; L-methionine from S-methyl-5-thio-alpha-D-ribose 1-phosphate: step 5/6. Functionally, catalyzes 2 different reactions between oxygen and the acireductone 1,2-dihydroxy-3-keto-5-methylthiopentene (DHK-MTPene) depending upon the metal bound in the active site. Fe-containing acireductone dioxygenase (Fe-ARD) produces formate and 2-keto-4-methylthiobutyrate (KMTB), the alpha-ketoacid precursor of methionine in the methionine recycle pathway. Ni-containing acireductone dioxygenase (Ni-ARD) produces methylthiopropionate, carbon monoxide and formate, and does not lie on the methionine recycle pathway. This Synechococcus sp. (strain CC9902) protein is Acireductone dioxygenase.